A 136-amino-acid chain; its full sequence is Large ribosomal subunit protein uL16 (136 aa).

Belongs to the universal ribosomal protein uL16 family. Part of the 50S ribosomal subunit.

In terms of biological role, binds 23S rRNA and is also seen to make contacts with the A and possibly P site tRNAs. The sequence is that of Large ribosomal subunit protein uL16 from Elusimicrobium minutum (strain Pei191).